A 201-amino-acid polypeptide reads, in one-letter code: Recombination protein RecR (201 aa).

The C4-type zinc-finger motif lies at 60–75 (CTSCGNVDTSDPCTIC). Residues 83–178 (TTLVVVEDVS…KVTRLAHGVP (96 aa)) form the Toprim domain.

The protein belongs to the RecR family.

May play a role in DNA repair. It seems to be involved in an RecBC-independent recombinational process of DNA repair. It may act with RecF and RecO. This is Recombination protein RecR from Methylobacterium radiotolerans (strain ATCC 27329 / DSM 1819 / JCM 2831 / NBRC 15690 / NCIMB 10815 / 0-1).